Here is a 237-residue protein sequence, read N- to C-terminus: Ribonuclease PH (237 aa).

Residues R86 and 124–126 (GTR) each bind phosphate.

Belongs to the RNase PH family. In terms of assembly, homohexameric ring arranged as a trimer of dimers.

It catalyses the reaction tRNA(n+1) + phosphate = tRNA(n) + a ribonucleoside 5'-diphosphate. Its function is as follows. Phosphorolytic 3'-5' exoribonuclease that plays an important role in tRNA 3'-end maturation. Removes nucleotide residues following the 3'-CCA terminus of tRNAs; can also add nucleotides to the ends of RNA molecules by using nucleoside diphosphates as substrates, but this may not be physiologically important. Probably plays a role in initiation of 16S rRNA degradation (leading to ribosome degradation) during starvation. This is Ribonuclease PH from Myxococcus xanthus (strain DK1622).